A 113-amino-acid polypeptide reads, in one-letter code: Protein FAM27E3 (113 aa).

Positions 1–113 (MGIFQLLRDR…YTHRHTHRVL (113 aa)) are disordered. The span at 77–99 (QTDRERERNTQRLRDRERRENGR) shows a compositional bias: basic and acidic residues. Residues 100 to 113 (HTHTYTHRHTHRVL) are compositionally biased toward basic residues.

It belongs to the FAM27 family.

This is Protein FAM27E3 (FAM27E3) from Homo sapiens (Human).